We begin with the raw amino-acid sequence, 1930 residues long: Myosin-16 (1930 aa).

Residues 35–84 (DIKKSCWVKDEKEGFIAGEIQSEQGDQVTVKTVNNQTVTVKKDDVQQMNP) form the Myosin N-terminal SH3-like domain. Residues 88–774 (YQASDMADMT…ILAKLEDMRD (687 aa)) enclose the Myosin motor domain. 181-188 (GESGAGKT) provides a ligand contact to ATP. Actin-binding regions lie at residues 652–674 (LNKLMATLHSTAPHFVRCIVPNE) and 753–767 (KIGHTKVFFRAGILA). An IQ domain is found at 777 to 806 (LAKIMTMLQCRLRGFLMRIEFKKMLERRIG). Positions 835-1921 (LLNVARQEEE…ALNKLRTRHR (1087 aa)) form a coiled coil. A disordered region spans residues 1116 to 1137 (EELEAERSMRAKVEKQRSDLSR). Positions 1120 to 1137 (AERSMRAKVEKQRSDLSR) are enriched in basic and acidic residues.

The protein belongs to the TRAFAC class myosin-kinesin ATPase superfamily. Myosin family.

It localises to the cytoplasm. The protein localises to the myofibril. In terms of biological role, may play a role in masticatory muscles contraction. The polypeptide is Myosin-16 (Canis lupus familiaris (Dog)).